Here is a 337-residue protein sequence, read N- to C-terminus: Inositol 2-dehydrogenase 1 (337 aa).

It belongs to the Gfo/Idh/MocA family. In terms of assembly, homotetramer.

The enzyme catalyses myo-inositol + NAD(+) = scyllo-inosose + NADH + H(+). Functionally, involved in the oxidation of myo-inositol (MI) to 2-keto-myo-inositol (2KMI or 2-inosose). The protein is Inositol 2-dehydrogenase 1 of Paenarthrobacter aurescens (strain TC1).